Here is a 409-residue protein sequence, read N- to C-terminus: Secreted LysM effector Blys2 (409 aa).

The signal sequence occupies residues 1-20 (MTRFTTTLVAALAGANLAAA). In terms of domain architecture, LysM 1 spans 24–71 (YKWRAHAGDTCDSLSSDWSVQVSDFIKWNPSVGANCSNGVTAGQEYCV). Asparagine 58 carries an N-linked (GlcNAc...) asparagine glycan. The interval 74-111 (NGAGSKPTTPPTGSPTTLTTAVTTASSTPTQPTDGAPS) is disordered. Residues 87–106 (SPTTLTTAVTTASSTPTQPT) are compositionally biased toward low complexity. LysM domains lie at 129–176 (AWYK…YVCV), 206–253 (KWYK…FVCV), 283–330 (KFYK…YYCI), and 357–405 (KYYK…YICV).

The protein belongs to the secreted LysM effector family.

The protein resides in the secreted. Its subcellular location is the cell wall. Secreted effector that enables the plant pathogenic fungus to manipulate host defenses for successful infection. Required for the full virulence to infect insect hosts. In contrast to Blys5, Blys2 is not able to protect fungal hyphae against the hydrolytic activity of chitinase but plays an important role in evasion of insect immunities. Binds chitin. Coats and protects the cell walls of insect pathogens from host cell recognition. The chain is Secreted LysM effector Blys2 from Beauveria bassiana (strain ARSEF 2860) (White muscardine disease fungus).